A 109-amino-acid chain; its full sequence is Prothymosin alpha (109 aa).

The tract at residues 1–109 is disordered; sequence MSDTSVDASV…AKKQKTDDDD (109 aa). Basic and acidic residues predominate over residues 9–35; sequence SVEKTTKDLKSKDKELVEETENGKDKP. A compositionally biased stretch (acidic residues) spans 41–81; sequence ENEENGEDGADNEEEEEVDEEDEEDEGEGDDDEGDEDDEAD. Residues 99–109 show a composition bias toward basic and acidic residues; sequence DAKKQKTDDDD.

Belongs to the pro/parathymosin family. Highly expressed in the testis.

It is found in the nucleus. Functionally, may have role in testicular activity. In Pelophylax lessonae (Pool frog), this protein is Prothymosin alpha.